The following is a 90-amino-acid chain: Small ribosomal subunit protein bS20 (90 aa).

This sequence belongs to the bacterial ribosomal protein bS20 family.

Binds directly to 16S ribosomal RNA. The sequence is that of Small ribosomal subunit protein bS20 from Rickettsia felis (strain ATCC VR-1525 / URRWXCal2) (Rickettsia azadi).